The following is a 467-amino-acid chain: Glutamyl-tRNA reductase (467 aa).

Substrate contacts are provided by residues 49 to 52 (TCNR), serine 109, 114 to 116 (EQQ), and glutamine 120. The active-site Nucleophile is cysteine 50. 189-194 (GAGAMG) contributes to the NADP(+) binding site. Residues 446–467 (GFSDTTRYGTSPAQSSSKYHAE) form a disordered region. The segment covering 447–467 (FSDTTRYGTSPAQSSSKYHAE) has biased composition (polar residues).

Belongs to the glutamyl-tRNA reductase family. In terms of assembly, homodimer.

It catalyses the reaction (S)-4-amino-5-oxopentanoate + tRNA(Glu) + NADP(+) = L-glutamyl-tRNA(Glu) + NADPH + H(+). It participates in porphyrin-containing compound metabolism; protoporphyrin-IX biosynthesis; 5-aminolevulinate from L-glutamyl-tRNA(Glu): step 1/2. Catalyzes the NADPH-dependent reduction of glutamyl-tRNA(Glu) to glutamate 1-semialdehyde (GSA). This is Glutamyl-tRNA reductase from Mycobacterium leprae (strain TN).